The sequence spans 532 residues: Telomerase Cajal body protein 1 (532 aa).

The tract at residues 1–48 (MKTSEELRLAPDSLPSDLVPAPVLQASPADKNTDSEPVPPPCGGDDQL) is disordered. Serine 27, serine 61, and serine 83 each carry phosphoserine. A disordered region spans residues 83–115 (SPRIEEQEVPENASLPVEETNRPELESGEAMEG). 6 WD repeats span residues 151-190 (RSEN…YSES), 206-251 (EGDT…LRAS), 256-297 (NHLD…RDCE), 307-348 (GQSG…ALLG), 349-389 (GHQG…HLLW), and 395-434 (VTTN…SDCK). At threonine 474 the chain carries Phosphothreonine. Serine 476 bears the Phosphoserine mark. Residues 505–532 (CGGGPDPSNPDEDQDEKGQGRTEAVGMS) form a disordered region.

Belongs to the TCAB1 family. As to quaternary structure, component of the telomerase holoenzyme complex composed of one molecule of TERT, one molecule of WRAP53/TCAB1, two molecules of H/ACA ribonucleoprotein complex subunits DKC1, NOP10, NHP2 and GAR1, and a telomerase RNA template component (TERC). The telomerase holoenzyme complex is associated with TEP1, SMG6/EST1A and POT1. Interacts with the chaperonin-containing T-complex (TRiC) complex; which mediates the folding of WRAP53/TCAB1. Interacts with COIL. Interacts with SMN1. Interacts with RNF8. Interacts with histone H2AX. Phosphorylated at Ser-61 by ATM in response to DNA damage, promoting its interaction with histone H2AX and localization to sites of DNA double-strand breaks.

It is found in the nucleus. The protein resides in the cajal body. The protein localises to the chromosome. It localises to the telomere. Its function is as follows. RNA chaperone that plays a key role in telomere maintenance and RNA localization to Cajal bodies. Specifically recognizes and binds the Cajal body box (CAB box) present in both small Cajal body RNAs (scaRNAs) and telomerase RNA template component (TERC). Essential component of the telomerase holoenzyme complex, a ribonucleoprotein complex essential for the replication of chromosome termini that elongates telomeres in most eukaryotes. In the telomerase holoenzyme complex, required to stimulate the catalytic activity of the complex. Acts by specifically binding the CAB box of the TERC RNA and controlling the folding of the CR4/CR5 region of the TERC RNA, a critical step for telomerase activity. In addition, also controls telomerase holoenzyme complex localization to Cajal body. During S phase, required for delivery of TERC to telomeres during S phase and for telomerase activity. In addition to its role in telomere maintenance, also required for Cajal body formation, probably by mediating localization of scaRNAs to Cajal bodies. Also plays a role in DNA repair: phosphorylated by ATM in response to DNA damage and relocalizes to sites of DNA double-strand breaks to promote the repair of DNA double-strand breaks. Acts by recruiting the ubiquitin ligase RNF8 to DNA breaks and promote both homologous recombination (HR) and non-homologous end joining (NHEJ). This chain is Telomerase Cajal body protein 1, found in Rattus norvegicus (Rat).